Here is a 115-residue protein sequence, read N- to C-terminus: Putative membrane protein insertion efficiency factor (115 aa).

It belongs to the UPF0161 family.

It is found in the cell membrane. In terms of biological role, could be involved in insertion of integral membrane proteins into the membrane. This is Putative membrane protein insertion efficiency factor from Mycobacterium avium (strain 104).